A 270-amino-acid polypeptide reads, in one-letter code: 5'-AMP-activated protein kinase subunit beta-1 (270 aa).

The tract at residues 1-44 (MGNTSSERAALDRQGGHKTPRRDSSGGSKDGDRPKILMDSPEDA) is disordered. Residue glycine 2 is the site of N-myristoyl glycine attachment. Residue threonine 4 is modified to Phosphothreonine. Phosphoserine is present on residues serine 5 and serine 6. Basic and acidic residues predominate over residues 9–36 (AALDRQGGHKTPRRDSSGGSKDGDRPKI). Position 19 is a phosphothreonine (threonine 19). Phosphoserine; by autocatalysis is present on residues serine 24 and serine 25. Phosphoserine occurs at positions 40, 96, and 101. Positions 68–163 (EVNDKAPAQA…QVKKTDFEVF (96 aa)) are glycogen-binding domain. Residue serine 108 is modified to Phosphoserine; by autocatalysis. Threonine 148 bears the Phosphothreonine mark. At serine 182 the chain carries Phosphoserine. Residue lysine 201 is modified to N6-succinyllysine.

The protein belongs to the 5'-AMP-activated protein kinase beta subunit family. As to quaternary structure, AMPK is a heterotrimer of an alpha catalytic subunit (PRKAA1 or PRKAA2), a beta (PRKAB1 or PRKAB2) and a gamma non-catalytic subunits (PRKAG1, PRKAG2 or PRKAG3). Interacts with FNIP1 and FNIP2. Post-translationally, phosphorylated when associated with the catalytic subunit (PRKAA1 or PRKAA2). Phosphorylated by ULK1; leading to negatively regulate AMPK activity and suggesting the existence of a regulatory feedback loop between ULK1 and AMPK.

Non-catalytic subunit of AMP-activated protein kinase (AMPK), an energy sensor protein kinase that plays a key role in regulating cellular energy metabolism. In response to reduction of intracellular ATP levels, AMPK activates energy-producing pathways and inhibits energy-consuming processes: inhibits protein, carbohydrate and lipid biosynthesis, as well as cell growth and proliferation. AMPK acts via direct phosphorylation of metabolic enzymes, and by longer-term effects via phosphorylation of transcription regulators. Also acts as a regulator of cellular polarity by remodeling the actin cytoskeleton; probably by indirectly activating myosin. Beta non-catalytic subunit acts as a scaffold on which the AMPK complex assembles, via its C-terminus that bridges alpha (PRKAA1 or PRKAA2) and gamma subunits (PRKAG1, PRKAG2 or PRKAG3). The chain is 5'-AMP-activated protein kinase subunit beta-1 (PRKAB1) from Bos taurus (Bovine).